Reading from the N-terminus, the 344-residue chain is Protein BIM1 (344 aa).

An N-acetylserine modification is found at serine 2. Residues 6-107 form the Calponin-homology (CH) domain; that stretch reads GESRTELLTW…FLQWLKKHWI (102 aa). The disordered stretch occupies residues 126–173; the sequence is IITNNSATKPRTVSNPTTAKRSSSTGTGSAMSGGLATRHSSLGINGSR. Residues 127–146 show a composition bias toward polar residues; it reads ITNNSATKPRTVSNPTTAKR. Low complexity predominate over residues 147–159; that stretch reads SSSTGTGSAMSGG. Serine 157 is subject to Phosphoserine. Positions 163–173 are enriched in polar residues; sequence RHSSLGINGSR. Positions 188–281 constitute an EB1 C-terminal domain; sequence ELTKSQETIG…LYATAEGFEM (94 aa). Residues 292–312 are disordered; sequence NLGEHGTVPNQGGYANSNGEV.

Belongs to the MAPRE family.

It localises to the cytoplasm. The protein resides in the cytoskeleton. In terms of biological role, binds microtubules. The polypeptide is Protein BIM1 (BIM1) (Saccharomyces cerevisiae (strain ATCC 204508 / S288c) (Baker's yeast)).